The chain runs to 406 residues: Kelch domain-containing protein 1 (406 aa).

Kelch repeat units follow at residues 24–76 (FLYV…CGAC), 80–134 (RLYV…VYKD), 135–181 (RLIY…TKTR), 208–258 (KGYV…AITD), 260–307 (KLFL…ACLG), and 311–361 (EIMV…LKSQ).

In terms of assembly, component of a CRL5 E3 ubiquitin-protein ligase complex, also named ECS (Elongin BC-CUL2/5-SOCS-box protein) complex, composed of CUL5, Elongin BC (ELOB and ELOC), RBX1 and substrate-specific adapter KLHDC1.

The protein resides in the cytoplasm. It localises to the cytosol. The protein operates within protein modification; protein ubiquitination. Its function is as follows. Substrate-recognition component of a Cul5-RING (CRL5) E3 ubiquitin-protein ligase complex of the DesCEND (destruction via C-end degrons) pathway, which recognizes a C-degron located at the extreme C terminus of target proteins, leading to their ubiquitination and degradation. The C-degron recognized by the DesCEND pathway is usually a motif of less than ten residues and can be present in full-length proteins, truncated proteins or proteolytically cleaved forms. The CRL5(KLHDC1) complex mediates ubiquitination and degradation of truncated SELENOS selenoprotein produced by failed UGA/Sec decoding, which ends with a glycine. This is Kelch domain-containing protein 1 from Mus musculus (Mouse).